Consider the following 82-residue polypeptide: Small ribosomal subunit protein bS16 (82 aa).

It belongs to the bacterial ribosomal protein bS16 family.

The polypeptide is Small ribosomal subunit protein bS16 (Actinobacillus succinogenes (strain ATCC 55618 / DSM 22257 / CCUG 43843 / 130Z)).